The sequence spans 2002 residues: Methylcytosine dioxygenase TET2 (2002 aa).

Basic and acidic residues predominate over residues 1–11 (MEQDRTNHVEG). A disordered region spans residues 1 to 22 (MEQDRTNHVEGNRLSPFLIPSP). Phosphoserine occurs at positions 15, 75, and 99. The span at 113–124 (KQDQKANGERRN) shows a compositional bias: basic and acidic residues. Disordered regions lie at residues 113–154 (KQDQ…VSSV), 266–287 (HPSH…LPPK), 349–368 (GEEF…GSSE), 390–488 (DSFS…VNRN), 703–748 (LNQQ…QQKL), 930–949 (VPDQ…TQKH), and 1075–1095 (DSHT…PTKR). Polar residues-rich tracts occupy residues 126-143 (GVSQ…NVSD) and 267-283 (PSHT…SNSE). Pro residues predominate over residues 397–416 (TPPPPSQLLLSPPPPLPQVP). 2 stretches are compositionally biased toward polar residues: residues 479–488 (RPQNNCVNRN) and 703–718 (LNQQ…NSHL). Positions 731 to 748 (QPSQSSHLPQNQQQQQKL) are enriched in low complexity. Composition is skewed to polar residues over residues 935–944 (GSHTQTPPQK) and 1081–1095 (LEQQ…PTKR). Residues serine 1107 and serine 1109 each carry the phosphoserine modification. Residues cysteine 1133, cysteine 1135, cysteine 1193, histidine 1219, and cysteine 1221 each contribute to the Zn(2+) site. Position 1261 (arginine 1261) interacts with 2-oxoglutarate. Residues cysteine 1271, cysteine 1273, cysteine 1289, and cysteine 1298 each contribute to the Zn(2+) site. Positions 1290–1303 (SWSMYYNGCKFARS) are interaction with DNA. Residue lysine 1299 forms a Glycyl lysine isopeptide (Lys-Gly) (interchain with G-Cter in ubiquitin) linkage. Cysteine 1358 lines the Zn(2+) pocket. Cysteine 1374 contributes to the 2-oxoglutarate binding site. Residue histidine 1380 participates in Zn(2+) binding. Fe cation-binding residues include histidine 1382 and aspartate 1384. Position 1387 (asparagine 1387) interacts with substrate. Residue histidine 1416 coordinates 2-oxoglutarate. 2 disordered regions span residues 1475–1507 (AAEK…NASQ) and 1521–1587 (VMQQ…HTSD). Positions 1477-1487 (EKLSSLENSSN) are enriched in low complexity. The segment covering 1496–1507 (PSRTKQTENASQ) has biased composition (polar residues). 2 stretches are compositionally biased toward low complexity: residues 1523–1532 (QQSQQPQPLQ) and 1539–1551 (QQQQ…QPHH). A compositionally biased stretch (polar residues) spans 1554 to 1568 (TESVNSYSASGSTNP). Position 1682 is an asymmetric dimethylarginine (arginine 1682). Histidine 1881 lines the Fe cation pocket. 1896–1898 (RIS) serves as a coordination point for 2-oxoglutarate. A substrate-binding site is contributed by 1902 to 1904 (YQH). Residue histidine 1912 participates in Zn(2+) binding. The disordered stretch occupies residues 1932–1961 (CEKYGPDYVPQKSHGKKVKREPAEPHETSE). The segment covering 1951 to 1960 (REPAEPHETS) has biased composition (basic and acidic residues).

Belongs to the TET family. In terms of assembly, interacts with HCFC1. Interacts with OGT. Interacts with PROSER1; this interaction mediates TET2 O-GlcNAcylation and stability by promoting the interaction between OGT and TET2. Directly interacts (via C-terminus) with the DCAF1 component of the CRL4(VprBP) E3 ubiquitin-protein ligase complex. Fe(2+) serves as cofactor. The cofactor is Zn(2+). Post-translationally, may be glycosylated. It is unclear whether interaction with OGT leads to GlcNAcylation. According to a report, it is not GlcNAcylated by OGT. In contrast, another group reports GlcNAcylation by OGT in mouse ortholog. In terms of processing, monoubiquitinated at Lys-1299 by the DCX (DDB1-CUL4-X-box) E3 ubiquitin-protein ligase complex called CRL4(VprBP) or CUL4A-RBX1-DDB1-DCAF1/VPRBP complex; this modification promotes binding to DNA. Acetylated. Deacetylase HDAC6 acts as a valine sensor by binding to valine through its primate-specific SE14 repeat region and deacetylates TET2 following valine deprivation which promotes TET2-dependent DNA demethylation. As to expression, broadly expressed. Highly expressed in hematopoietic cells; highest expression observed in granulocytes. Expression is reduced in granulocytes from peripheral blood of patients affected by myelodysplastic syndromes.

The protein localises to the nucleus. The protein resides in the chromosome. It catalyses the reaction a 5-methyl-2'-deoxycytidine in DNA + 2-oxoglutarate + O2 = a 5-hydroxymethyl-2'-deoxycytidine in DNA + succinate + CO2. The catalysed reaction is a 5-hydroxymethyl-2'-deoxycytidine in DNA + 2-oxoglutarate + O2 = a 5-formyl-2'-deoxycytidine in DNA + succinate + CO2 + H2O. It carries out the reaction a 5-formyl-2'-deoxycytidine in DNA + 2-oxoglutarate + O2 = a 5-carboxyl-2'-deoxycytidine in DNA + succinate + CO2 + H(+). Functionally, dioxygenase that catalyzes the conversion of the modified genomic base 5-methylcytosine (5mC) into 5-hydroxymethylcytosine (5hmC) and plays a key role in active DNA demethylation. Has a preference for 5-hydroxymethylcytosine in CpG motifs. Also mediates subsequent conversion of 5hmC into 5-formylcytosine (5fC), and conversion of 5fC to 5-carboxylcytosine (5caC). Conversion of 5mC into 5hmC, 5fC and 5caC probably constitutes the first step in cytosine demethylation. Methylation at the C5 position of cytosine bases is an epigenetic modification of the mammalian genome which plays an important role in transcriptional regulation. In addition to its role in DNA demethylation, also involved in the recruitment of the O-GlcNAc transferase OGT to CpG-rich transcription start sites of active genes, thereby promoting histone H2B GlcNAcylation by OGT. The protein is Methylcytosine dioxygenase TET2 (TET2) of Homo sapiens (Human).